Here is a 341-residue protein sequence, read N- to C-terminus: L-threonine 3-dehydrogenase (341 aa).

A Zn(2+)-binding site is contributed by C38. Residues T40 and H43 each act as charge relay system in the active site. 6 residues coordinate Zn(2+): H63, E64, C93, C96, C99, and C107. Residues I175, D195, R200, 262-264, and 286-287 each bind NAD(+); these read LGI and IY.

This sequence belongs to the zinc-containing alcohol dehydrogenase family. As to quaternary structure, homotetramer. It depends on Zn(2+) as a cofactor.

Its subcellular location is the cytoplasm. The enzyme catalyses L-threonine + NAD(+) = (2S)-2-amino-3-oxobutanoate + NADH + H(+). Its pathway is amino-acid degradation; L-threonine degradation via oxydo-reductase pathway; glycine from L-threonine: step 1/2. Catalyzes the NAD(+)-dependent oxidation of L-threonine to 2-amino-3-ketobutyrate. In Cronobacter sakazakii (strain ATCC BAA-894) (Enterobacter sakazakii), this protein is L-threonine 3-dehydrogenase.